The primary structure comprises 218 residues: Ras-related protein Rab-42 (218 aa).

GTP-binding residues include Ala19, Gly21, Lys22, Thr23, and Thr46. Residues Thr23, Thr46, and Asp70 each contribute to the Mg(2+) site. Residues Gly73, Lys130, Asp132, Val160, and Lys161 each contribute to the GTP site. S-geranylgeranyl cysteine attachment occurs at residues Cys216 and Cys218.

This sequence belongs to the small GTPase superfamily. Rab family. It depends on Mg(2+) as a cofactor.

It localises to the membrane. The catalysed reaction is GTP + H2O = GDP + phosphate + H(+). Its activity is regulated as follows. Regulated by guanine nucleotide exchange factors (GEFs) which promote the exchange of bound GDP for free GTP. Regulated by GTPase activating proteins (GAPs) which increase the GTP hydrolysis activity. Inhibited by GDP dissociation inhibitors (GDIs). The small GTPases Rab are key regulators of intracellular membrane trafficking, from the formation of transport vesicles to their fusion with membranes. Rabs cycle between an inactive GDP-bound form and an active GTP-bound form that is able to recruit to membranes different sets of downstream effectors directly responsible for vesicle formation, movement, tethering and fusion. The physiological function of RAB42 remains undefined. This is Ras-related protein Rab-42 from Homo sapiens (Human).